The primary structure comprises 69 residues: Rubredoxin-1 (69 aa).

One can recognise a Rubredoxin-like domain in the interval 14–69; that stretch reads QASWMCAECGYIYDPAEGNLETNIRPGMPFDKLPDDWSCPVCNHPKNQFTKFISQL. Fe cation-binding residues include C19, C22, C52, and C55.

It belongs to the rubredoxin family. As to quaternary structure, monomer. Requires Fe(3+) as cofactor.

Functionally, serves as an electron acceptor for pyruvate ferredoxin oxidoreductase (PFOR). The protein is Rubredoxin-1 (rub1) of Chlorobaculum tepidum (strain ATCC 49652 / DSM 12025 / NBRC 103806 / TLS) (Chlorobium tepidum).